The chain runs to 819 residues: Disintegrin and metalloproteinase domain-containing protein 9 (819 aa).

The signal sequence occupies residues 1-28 (MGSGARFPSGTLRVRWLLLLGLVGPVLG). Over 29-697 (AARPGFQQTS…YNEMNTALRD (669 aa)) the chain is Extracellular. N-linked (GlcNAc...) asparagine glycosylation is found at asparagine 125, asparagine 144, asparagine 154, and asparagine 231. The Peptidase M12B domain occupies 212–406 (RYVELFIVVD…KGGNCLLNIP (195 aa)). 7 disulfides stabilise this stretch: cysteine 322-cysteine 401, cysteine 363-cysteine 385, cysteine 365-cysteine 370, cysteine 473-cysteine 493, cysteine 644-cysteine 656, cysteine 650-cysteine 662, and cysteine 664-cysteine 673. A Zn(2+)-binding site is contributed by histidine 347. The active site involves glutamate 348. Residues histidine 351 and histidine 357 each coordinate Zn(2+). 2 N-linked (GlcNAc...) asparagine glycosylation sites follow: asparagine 381 and asparagine 487. The Disintegrin domain maps to 414 to 501 (APSCGNKLVD…FCQPDVFIQN (88 aa)). An EGF-like domain is found at 644–698 (CDVQKKCHGHGVCNSNKNCHCENGWAPPNCETKGYGGSVDSGPTYNEMNTALRDG). Residues 698-718 (GLLVFFFLIVPLIVCAIFIFI) traverse the membrane as a helical segment. At 719 to 819 (KRDQLWRSYF…PAPPLYSSLT (101 aa)) the chain is on the cytoplasmic side. Disordered stretches follow at residues 734–763 (QTYE…VTPP) and 780–819 (AKQP…SSLT). Residues 735–750 (TYESDGKNQANPSRQP) are compositionally biased toward polar residues. At serine 758 the chain carries Phosphoserine. A Phosphothreonine modification is found at threonine 761.

Interacts with SH3GL2 and SNX9 through its cytoplasmic tail. Interacts with ITGA6. It depends on Zn(2+) as a cofactor. Proteolytically cleaved in the trans-Golgi network before it reaches the plasma membrane to generate a mature protein. The removal of the pro-domain occurs via cleavage at two different sites. Processed most likely by a pro-protein convertase such as furin, at the boundary between the pro-domain and the catalytic domain. An additional upstream cleavage pro-protein convertase site (Arg-56/Glu-57) has an important role in the activation of ADAM9. In terms of processing, phosphorylation is induced in vitro by phorbol-12-myristate-13-acetate (PMA). As to expression, widely expressed. Expressed in chondrocytes. Isoform 2 is highly expressed in liver and heart.

The protein resides in the cell membrane. It is found in the secreted. With respect to regulation, synthesized as an inactive form which is proteolytically cleaved to generate an active enzyme. Processing at the upstream site is particularly important for activation of the proenzyme, whereas processing at the boundary between the pro-domain and the catalytic domain does not appear to be essential. Inhibited by hydroxamic acid-based inhibitors. Functionally, metalloprotease that cleaves and releases a number of molecules with important roles in tumorigenesis and angiogenesis, such as TEK, KDR, EPHB4, CD40, VCAM1 and CDH5. May mediate cell-cell, cell-matrix interactions and regulate the motility of cells via interactions with integrins. Its function is as follows. May act as alpha-secretase for amyloid precursor protein (APP). This Homo sapiens (Human) protein is Disintegrin and metalloproteinase domain-containing protein 9 (ADAM9).